Consider the following 336-residue polypeptide: Fructose-1,6-bisphosphatase class 1 (336 aa).

Mg(2+) is bound by residues glutamate 91, aspartate 114, leucine 116, and aspartate 117. Substrate contacts are provided by residues 117 to 120 (DGSS), asparagine 210, tyrosine 243, and lysine 273. Position 279 (glutamate 279) interacts with Mg(2+).

This sequence belongs to the FBPase class 1 family. Homotetramer. Mg(2+) is required as a cofactor.

The protein resides in the cytoplasm. It catalyses the reaction beta-D-fructose 1,6-bisphosphate + H2O = beta-D-fructose 6-phosphate + phosphate. It participates in carbohydrate biosynthesis; gluconeogenesis. The polypeptide is Fructose-1,6-bisphosphatase class 1 (Dichelobacter nodosus (strain VCS1703A)).